A 715-amino-acid chain; its full sequence is Palmitoyltransferase ZDHHC5 (715 aa).

Residues 1–13 are Cytoplasmic-facing; sequence MPAESGKRFKPSK. A helical transmembrane segment spans residues 14–34; that stretch reads YVPVSAAAIFLVGATTLFFAF. Over 35–52 the chain is Extracellular; sequence TCPGLSLNVSPAVPIYNA. A helical membrane pass occupies residues 53-73; it reads IMFLFVLANFSMATFMDPGIF. Over 74 to 148 the chain is Cytoplasmic; sequence PRAEEDEDKE…NCIGRRNYRY (75 aa). Residue Tyr91 is modified to Phosphotyrosine. Positions 104–154 constitute a DHHC domain; that stretch reads KWCATCRFYRPPRCSHCSVCDNCVEEFDHHCPWVNNCIGRRNYRYFFLFLL. Residue Cys134 is the S-palmitoyl cysteine intermediate of the active site. A helical transmembrane segment spans residues 149–169; the sequence is FFLFLLSLTAHIMGVFGFGLL. Over 170–191 the chain is Extracellular; it reads YVLYHIEELSGVRTAVTMAVMC. The chain crosses the membrane as a helical span at residues 192–212; sequence VAGLFFIPVAGLTGFHVVLVA. Residues 213-715 are Cytoplasmic-facing; sequence RGRTTNEQVT…VGGTTYEISV (503 aa). A Phosphoserine modification is found at Ser247. Residues 289–715 are disordered; the sequence is GELRRTKSKG…VGGTTYEISV (427 aa). Position 294 is a phosphothreonine (Thr294). Phosphoserine is present on residues Ser296 and Ser299. Thr303 is subject to Phosphothreonine. Ser345 carries the post-translational modification Phosphoserine. Phosphothreonine occurs at positions 348 and 350. Over residues 359 to 373 the composition is skewed to low complexity; it reads SSSSTSAAMPHSSSA. Residues Ser380, Ser398, Ser406, and Ser409 each carry the phosphoserine modification. The residue at position 411 (Thr411) is a Phosphothreonine. Phosphoserine is present on residues Ser415, Ser425, Ser429, and Ser432. Over residues 422 to 432 the composition is skewed to low complexity; it reads SSGSRSSSLKS. Thr436 bears the Phosphothreonine mark. Positions 442 to 478 are enriched in polar residues; that stretch reads QLQSIRSEGTTSTSYKSLANQTRNGSLSYDSLLTPSD. Ser529 and Ser554 each carry phosphoserine. The segment covering 581 to 597 has biased composition (low complexity); sequence PRTSSSSDDSKRSPLSK. Position 617 is an omega-N-methylarginine (Arg617). Ser621 bears the Phosphoserine mark. Thr659 bears the Phosphothreonine mark. Residues 666-677 show a composition bias toward polar residues; the sequence is LKTTYSKSNGQP. Phosphoserine is present on residues Ser684 and Ser694. Residue Arg697 is modified to Omega-N-methylarginine.

Belongs to the DHHC palmitoyltransferase family. ERF2/ZDHHC9 subfamily. Phosphorylation regulates association with endocytic proteins and its subcellular localization. Phosphorylation by LYN during fatty acid uptake leads to inactivation of the activity. In terms of processing, autopalmitoylated. Palmitoylation of the C-terminal tail regulates stimulation-dependent plasma membrane motility. In terms of tissue distribution, highly enriched in brain, detectable in liver and heart, and undetectable in most other tissues.

It localises to the cell membrane. It catalyses the reaction L-cysteinyl-[protein] + hexadecanoyl-CoA = S-hexadecanoyl-L-cysteinyl-[protein] + CoA. In terms of biological role, palmitoyltransferase that catalyzes the addition of palmitate onto various protein substrates such as CTNND2, CD36, GSDMD, NLRP3, NOD1, NOD2, STAT3 and S1PR1 thus plays a role in various biological processes including cell adhesion, inflammation, fatty acid uptake, bacterial sensing or cardiac functions. Plays an important role in the regulation of synapse efficacy by mediating palmitoylation of delta-catenin/CTNND2, thereby increasing synaptic delivery and surface stabilization of alpha-amino-3-hydroxy-5-methyl-4-isoxazole propionic acid receptors (AMPARs). Under basal conditions, remains at the synaptic membrane through FYN-mediated phosphorylation that prevents association with endocytic proteins. Neuronal activity enhances the internalization and trafficking of DHHC5 from spines to dendritic shafts where it palmitoylates delta-catenin/CTNND2. Regulates cell adhesion at the plasma membrane by palmitoylating GOLGA7B and DSG2. Plays a role in innate immune response by mediating the palmitoylation of NOD1 and NOD2 and their proper recruitment to the bacterial entry site and phagosomes. Also participates in fatty acid uptake by palmitoylating CD36 and thereby targeting it to the plasma membrane. Upon binding of fatty acids to CD36, gets phosphorylated by LYN leading to inactivation and subsequent CD36 caveolar endocytosis. Controls oligodendrocyte development by catalyzing STAT3 palmitoylation. Acts as a regulator of inflammatory response by mediating palmitoylation of NLRP3 and GSDMD. Palmitoylates NLRP3 to promote inflammasome assembly and activation. Activates pyroptosis by catalyzing palmitoylation of gasdermin-D (GSDMD), thereby promoting membrane translocation and pore formation of GSDMD. The polypeptide is Palmitoyltransferase ZDHHC5 (Zdhhc5) (Mus musculus (Mouse)).